Here is a 212-residue protein sequence, read N- to C-terminus: Ion-translocating oxidoreductase complex subunit G (212 aa).

A helical membrane pass occupies residues 9–29; it reads ASLLGLFALLCTALVALVNQF. Threonine 176 carries the FMN phosphoryl threonine modification.

Belongs to the RnfG family. In terms of assembly, the complex is composed of six subunits: RnfA, RnfB, RnfC, RnfD, RnfE and RnfG. It depends on FMN as a cofactor.

It localises to the cell inner membrane. Functionally, part of a membrane-bound complex that couples electron transfer with translocation of ions across the membrane. This chain is Ion-translocating oxidoreductase complex subunit G, found in Shewanella loihica (strain ATCC BAA-1088 / PV-4).